The following is a 307-amino-acid chain: Agmatinase (307 aa).

Mn(2+) is bound by residues H126, D149, H151, D153, D230, and D232.

It belongs to the arginase family. Agmatinase subfamily. Requires Mn(2+) as cofactor.

The enzyme catalyses agmatine + H2O = urea + putrescine. It functions in the pathway amine and polyamine biosynthesis; putrescine biosynthesis via agmatine pathway; putrescine from agmatine: step 1/1. Functionally, catalyzes the formation of putrescine from agmatine. The sequence is that of Agmatinase from Sodalis glossinidius (strain morsitans).